The chain runs to 150 residues: Large ribosomal subunit protein bL9 (150 aa).

The protein belongs to the bacterial ribosomal protein bL9 family.

Functionally, binds to the 23S rRNA. The protein is Large ribosomal subunit protein bL9 of Corynebacterium efficiens (strain DSM 44549 / YS-314 / AJ 12310 / JCM 11189 / NBRC 100395).